Consider the following 2126-residue polypeptide: Phthioceranic/hydroxyphthioceranic acid synthase (2126 aa).

In terms of domain architecture, Ketosynthase family 3 (KS3) spans 24–447; that stretch reads VTPVAVIGMA…GTNVHAVVEQ (424 aa). Cys-196 functions as the Acyl-thioester intermediate; for beta-ketoacyl synthase activity in the catalytic mechanism. Residues His-331 and His-367 each act as for beta-ketoacyl synthase activity in the active site. The tract at residues 449–549 is linker domain (LD); it reads PQTEAQPHAA…VYQPAVGQDD (101 aa). The segment at 550–849 is acyltransferase (AT); that stretch reads RGPVWLFSGQ…VAALAGMRRE (300 aa). The active-site Acyl-ester intermediate; for acyltransferase activity is the Ser-641. Positions 909-1191 are dehydratase (DH); sequence STVAVHPLLG…LAVCGLRIGT (283 aa). Residues 914-1032 are N-terminal hotdog fold; the sequence is HPLLGAHVRL…RRASAVLQQV (119 aa). In terms of domain architecture, PKS/mFAS DH spans 914–1198; the sequence is HPLLGAHVRL…IGTGVSERDK (285 aa). Residue His-947 is the Proton acceptor; for dehydratase activity of the active site. The interval 1051 to 1198 is C-terminal hotdog fold; it reads PCRVDGEDLR…IGTGVSERDK (148 aa). Asp-1115 acts as the Proton donor; for dehydratase activity in catalysis. The pseudo beta-ketoacyl reductase (PsiKR) stretch occupies residues 1227–1398; sequence KWLLISDCAA…SEEDETAWRD (172 aa). The enoylreductase (ER) stretch occupies residues 1426–1750; the sequence is SGMRLQIRTP…EHTGKLVLHI (325 aa). The beta-ketoacyl reductase (KR) stretch occupies residues 1772–2019; the sequence is GSYIITGGLG…AERSRFFEVF (248 aa). NADP(+)-binding positions include 1780 to 1783, 1803 to 1806, 1831 to 1832, and 1904 to 1905; these read LGGL, SRTQ, DI, and FS. The 87-residue stretch at 2040–2126 folds into the Carrier domain; it reads DEWPARLRQL…DAPAAALSSQ (87 aa). Ser-2075 carries the post-translational modification O-(pantetheine 4'-phosphoryl)serine.

Requires pantetheine 4'-phosphate as cofactor.

It catalyses the reaction hexadecanoyl-[(hydroxy)phthioceranic acid synthase] + 7 (S)-methylmalonyl-CoA + 14 NADPH + 21 H(+) = C37-phthioceranyl-[(hydroxy)phthioceranic acid synthase] + 7 CO2 + 14 NADP(+) + 7 CoA + 7 H2O. It carries out the reaction hexadecanoyl-[(hydroxy)phthioceranic acid synthase] + 8 (S)-methylmalonyl-CoA + 16 NADPH + 24 H(+) = C40-phthioceranyl-[(hydroxy)phthioceranic acid synthase] + 8 CO2 + 16 NADP(+) + 8 CoA + 8 H2O. The protein is Phthioceranic/hydroxyphthioceranic acid synthase (pks2) of Mycobacterium bovis (strain BCG / Pasteur 1173P2).